A 237-amino-acid chain; its full sequence is Ribosomal RNA small subunit methyltransferase G (237 aa).

S-adenosyl-L-methionine contacts are provided by residues Gly-79, 130-131 (CE), and Arg-147.

It belongs to the methyltransferase superfamily. RNA methyltransferase RsmG family.

It localises to the cytoplasm. Its function is as follows. Specifically methylates the N7 position of a guanine in 16S rRNA. This is Ribosomal RNA small subunit methyltransferase G from Malacoplasma penetrans (strain HF-2) (Mycoplasma penetrans).